Consider the following 301-residue polypeptide: Probable alpha-L-glutamate ligase (301 aa).

An ATP-grasp domain is found at 104-287 (LQLLSRKGVG…IAGMIIEYIE (184 aa)). ATP-binding positions include Lys141, 178–179 (EY), Asp187, and 211–213 (RSN). Residues Asp248, Glu260, and Asn262 each contribute to the Mg(2+) site. Residues Asp248, Glu260, and Asn262 each coordinate Mn(2+).

This sequence belongs to the RimK family. The cofactor is Mg(2+). It depends on Mn(2+) as a cofactor.

The sequence is that of Probable alpha-L-glutamate ligase from Photobacterium profundum (strain SS9).